The primary structure comprises 93 residues: Progonadoliberin-2 (93 aa).

The N-terminal stretch at 1–24 (MACQRHLLFLLLVLFAVSTQLSHG) is a signal peptide. Residue Gln-25 is modified to Pyrrolidone carboxylic acid. The residue at position 34 (Gly-34) is a Glycine amide.

It belongs to the GnRH family. In terms of tissue distribution, midbrain and hindbrain.

It is found in the secreted. Stimulates the secretion of gonadotropins. This is Progonadoliberin-2 (gnrh2) from Aquarana catesbeiana (American bullfrog).